The primary structure comprises 237 residues: Protein YIPF4 (237 aa).

The Cytoplasmic portion of the chain corresponds to 1–106 (MQFSPTNGDF…FNRQVVRDNP (106 aa)). The chain crosses the membrane as a helical span at residues 107–127 (DFWGPLAVVLLFSMISIYGQF). The Lumenal segment spans residues 128 to 131 (RVVS). Residues 132-152 (WIITIWIFGSLTIFLLARVLG) traverse the membrane as a helical segment. The Cytoplasmic portion of the chain corresponds to 153–160 (GEVSYGQV). A helical transmembrane segment spans residues 161–181 (LGVIGYSLLPLIVIAPLLLVI). Over 182–188 (GGFEVVS) the chain is Lumenal. The chain crosses the membrane as a helical span at residues 189 to 209 (TLIKLFGVFWAAYSAASLLVG). The Cytoplasmic portion of the chain corresponds to 210 to 216 (DEFKTKK). The helical transmembrane segment at 217–237 (PLLIYPIFLLYIYFLSLYTGV) threads the bilayer.

Belongs to the YIP1 family.

It localises to the golgi apparatus. It is found in the cis-Golgi network membrane. Functionally, involved in the maintenance of the Golgi structure. This Danio rerio (Zebrafish) protein is Protein YIPF4 (yipf4).